Consider the following 248-residue polypeptide: Mitochondrial import inner membrane translocase subunit Tim21 (248 aa).

A mitochondrion-targeting transit peptide spans 1 to 18 (MICTFLRAVQYTEKLHRS). The disordered stretch occupies residues 67-98 (TQGPSPRKAKEDGSKQVSVHRSQRGGTAVPTS). The chain crosses the membrane as a helical span at residues 108–128 (FTYLIVVLFGISITGGLFYTI).

Belongs to the TIM21 family. In terms of assembly, component of the TIM23 complex. Component of the MITRAC (mitochondrial translation regulation assembly intermediate of cytochrome c oxidase complex) complex, the core components of this complex being COA3/MITRAC12 and COX14. Interacts with COA3 and MT-CO1/COX1.

The protein resides in the mitochondrion membrane. Participates in the translocation of transit peptide-containing proteins across the mitochondrial inner membrane. Also required for assembly of mitochondrial respiratory chain complex I and complex IV as component of the MITRAC (mitochondrial translation regulation assembly intermediate of cytochrome c oxidase complex) complex. Probably shuttles between the presequence translocase and respiratory-chain assembly intermediates in a process that promotes incorporation of early nuclear-encoded subunits into these complexes. This Homo sapiens (Human) protein is Mitochondrial import inner membrane translocase subunit Tim21 (TIMM21).